Here is a 270-residue protein sequence, read N- to C-terminus: 2-C-methyl-D-erythritol 4-phosphate cytidylyltransferase (270 aa).

Positions 1–33 are disordered; the sequence is MSDESRPSPAETPATTFAETSAETSAAGRSPAR. Residues 7 to 27 are compositionally biased toward low complexity; that stretch reads PSPAETPATTFAETSAETSAA.

Belongs to the IspD/TarI cytidylyltransferase family. IspD subfamily.

The enzyme catalyses 2-C-methyl-D-erythritol 4-phosphate + CTP + H(+) = 4-CDP-2-C-methyl-D-erythritol + diphosphate. The protein operates within isoprenoid biosynthesis; isopentenyl diphosphate biosynthesis via DXP pathway; isopentenyl diphosphate from 1-deoxy-D-xylulose 5-phosphate: step 2/6. Catalyzes the formation of 4-diphosphocytidyl-2-C-methyl-D-erythritol from CTP and 2-C-methyl-D-erythritol 4-phosphate (MEP). This Streptomyces coelicolor (strain ATCC BAA-471 / A3(2) / M145) protein is 2-C-methyl-D-erythritol 4-phosphate cytidylyltransferase.